The chain runs to 210 residues: N-(5'-phosphoribosyl)anthranilate isomerase (210 aa).

It belongs to the TrpF family.

The catalysed reaction is N-(5-phospho-beta-D-ribosyl)anthranilate = 1-(2-carboxyphenylamino)-1-deoxy-D-ribulose 5-phosphate. The protein operates within amino-acid biosynthesis; L-tryptophan biosynthesis; L-tryptophan from chorismate: step 3/5. This is N-(5'-phosphoribosyl)anthranilate isomerase from Staphylococcus aureus (strain bovine RF122 / ET3-1).